The following is a 920-amino-acid chain: Isoleucine--tRNA ligase (920 aa).

Residues 58–68 carry the 'HIGH' region motif; it reads PYANGHLHLGH. E569 lines the L-isoleucyl-5'-AMP pocket. Residues 610–614 carry the 'KMSKS' region motif; that stretch reads KMSKS. K613 provides a ligand contact to ATP. Zn(2+) is bound by residues C895, C898, C910, and C913.

Belongs to the class-I aminoacyl-tRNA synthetase family. IleS type 1 subfamily. In terms of assembly, monomer. It depends on Zn(2+) as a cofactor.

It is found in the cytoplasm. It carries out the reaction tRNA(Ile) + L-isoleucine + ATP = L-isoleucyl-tRNA(Ile) + AMP + diphosphate. Functionally, catalyzes the attachment of isoleucine to tRNA(Ile). As IleRS can inadvertently accommodate and process structurally similar amino acids such as valine, to avoid such errors it has two additional distinct tRNA(Ile)-dependent editing activities. One activity is designated as 'pretransfer' editing and involves the hydrolysis of activated Val-AMP. The other activity is designated 'posttransfer' editing and involves deacylation of mischarged Val-tRNA(Ile). The polypeptide is Isoleucine--tRNA ligase (Helicobacter pylori (strain Shi470)).